We begin with the raw amino-acid sequence, 172 residues long: Peptidyl-prolyl cis-trans isomerase (172 aa).

In terms of domain architecture, PPIase cyclophilin-type spans 7–170 (FFDMAIAGNP…RPVTIADCGQ (164 aa)).

This sequence belongs to the cyclophilin-type PPIase family. In terms of tissue distribution, expressed in meristematic tissues, with higher levels in nodules.

It localises to the cytoplasm. It carries out the reaction [protein]-peptidylproline (omega=180) = [protein]-peptidylproline (omega=0). Binds cyclosporin A (CsA). CsA mediates some of its effects via an inhibitory action on PPIase. In terms of biological role, PPIases accelerate the folding of proteins. It catalyzes the cis-trans isomerization of proline imidic peptide bonds in oligopeptides. The polypeptide is Peptidyl-prolyl cis-trans isomerase (Lupinus luteus (European yellow lupine)).